Consider the following 394-residue polypeptide: MVEPASPDSDEGISLLEFHGNGDRSWQLNFDDFQVSPEHKEKKSPSKLHNCLGCLGPEDNVADYYQQQVEMLEGFTEMDELAERGFVPGMSKEEQDNLAKSETLAIRISNIANMLLFAAKVYASVTSGSLAIIASTLDSLLDLLSGFILWFTAFSMQTPNPYQYPIGKKRMQPLGILVFASVMATLGLQIILESLRTMLSSHKEFNLTKEQESWVVGIMLSVTLVKLLLVLYCRSFTNEIVKAYAQDHFFDVITNIIGLIAVILANYIDYWIDPVGAIILALYTIRTWSMTVLENVNSLVGKSARPEYLQKLTYLCWNHHKAIRHIDTVRAYTFGSHYFVEVDIVLPADMPLQVAHDIGESLQEKLELLEEIERAFVHLDYEYTHKPEHARSHC.

Residues 1–103 (MVEPASPDSD…EQDNLAKSET (103 aa)) lie on the Cytoplasmic side of the membrane. Residues 104–124 (LAIRISNIANMLLFAAKVYAS) form a helical membrane-spanning segment. At 125 to 130 (VTSGSL) the chain is on the vacuolar side. A helical membrane pass occupies residues 131–151 (AIIASTLDSLLDLLSGFILWF). Topologically, residues 152 to 172 (TAFSMQTPNPYQYPIGKKRMQ) are cytoplasmic. The helical transmembrane segment at 173–193 (PLGILVFASVMATLGLQIILE) threads the bilayer. Residues 194-212 (SLRTMLSSHKEFNLTKEQE) are Vacuolar-facing. Residues 213 to 233 (SWVVGIMLSVTLVKLLLVLYC) traverse the membrane as a helical segment. The Cytoplasmic portion of the chain corresponds to 234-251 (RSFTNEIVKAYAQDHFFD). Residues 252–272 (VITNIIGLIAVILANYIDYWI) form a helical membrane-spanning segment. A topological domain (vacuolar) is located at residue Asp273. The helical transmembrane segment at 274–294 (PVGAIILALYTIRTWSMTVLE) threads the bilayer. Topologically, residues 295 to 394 (NVNSLVGKSA…HKPEHARSHC (100 aa)) are cytoplasmic.

This sequence belongs to the cation diffusion facilitator (CDF) transporter (TC 2.A.4) family. SLC30A subfamily. As to expression, widely expressed.

The protein resides in the prevacuolar compartment membrane. It localises to the golgi apparatus membrane. Cation/proton antiporter involved in endogenous manganese tolerance probably through vesicular trafficking and exocytosis. This is Metal tolerance protein 11 (MTP11) from Arabidopsis thaliana (Mouse-ear cress).